The sequence spans 761 residues: Complement factor B (761 aa).

An N-terminal signal peptide occupies residues M1–A22. Sushi domains are found at residues V32 to A97, I98 to D157, and G160 to D217. 6 disulfide bridges follow: C34-C73, C59-C95, C100-C142, C128-C155, C162-C202, and C188-C215. 2 N-linked (GlcNAc...) asparagine glycosylation sites follow: N119 and N139. The VWFA domain maps to N267 to I466. S275 and S277 together coordinate Mg(2+). N282 carries an N-linked (GlcNAc...) asparagine glycan. A Mg(2+)-binding site is contributed by T350. Residue N375 is glycosylated (N-linked (GlcNAc...) asparagine). Positions L474–K754 constitute a Peptidase S1 domain. Disulfide bonds link C475/C593, C508/C524, C596/C612, C653/C679, and C692/C722. Catalysis depends on charge relay system residues H523 and D573. S696 acts as the Charge relay system in catalysis.

Belongs to the peptidase S1 family. In terms of assembly, monomer. Interacts with complement C3b; this interaction is dependent on the presence of Mg(2+). As to quaternary structure, catalytic component of the C3 convertase of the alternative complement pathway, also named C3bBb, composed of complement factor B Bb and complement C3b. Catalytic component of the C5 convertase of the alternative complement pathway, also named C3bBb3b, composed of complement factor B Bb and additional molecules of complement C3b. Interacts to CFP; this interaction contributes to the stabilization of the active C3-convertase enzyme complex. Mg(2+) is required as a cofactor. It depends on Mn(2+) as a cofactor. Post-translationally, cleaved by CFD following activation of the alternative complement system, generating Ba and Bb chains. Cleavage and activation takes place when CFB is already associated with complement C3b.

The protein localises to the secreted. It is found in the cell surface. It carries out the reaction Cleavage of Arg-|-Ser bond in complement component C3 alpha-chain to yield C3a and C3b, and Arg-|-Xaa bond in complement component C5 alpha-chain to yield C5a and C5b.. Functionally, precursor of the catalytic component of the C3 and C5 convertase complexes of the alternative pathway of the complement system, a cascade of proteins that leads to phagocytosis and breakdown of pathogens and signaling that strengthens the adaptive immune system. The alternative complement pathway acts as an amplification loop that enhances other complement pathways (classical, lectin and GZMK) by promoting formation of additional C3 and C5 convertases. CFB is cleaved and activated by CFD to generate Ba and Bb chains; Bb chain constituting the catalytic component of the C3 and C5 convertases. Serine protease component of the complement C3 and C5 convertase complexes of the alternative complement pathway. Following cleavage and activation by factor D (CFD), forms the C3 convertase together with complement C3b. As part of the C3 convertase, cleaves and activates C3 into C3a anaphylatoxin and C3b opsonin, the next components of the complement pathways. When an additional complement C3b molecule binds to the C3 convertase, forms the C5 convertase, which cleaves and activates C5 into C5a anaphylatoxin and C5b component of the membrane attack complex. In terms of biological role, involved in proliferation and differentiation of preactivated B-lymphocytes, rapid spreading of peripheral blood monocytes, stimulation of lymphocyte blastogenesis and lysis of erythrocytes. This is Complement factor B (Cfb) from Mus musculus (Mouse).